The primary structure comprises 346 residues: Sensor histidine kinase GraS (346 aa).

The next 2 membrane-spanning stretches (helical) occupy residues methionine 15–aspartate 35 and leucine 43–phenylalanine 63. In terms of domain architecture, Histidine kinase spans glutamate 126 to asparagine 332.

Interacts with GraX.

The protein resides in the cell membrane. It carries out the reaction ATP + protein L-histidine = ADP + protein N-phospho-L-histidine.. In terms of biological role, member of the two-component regulatory system GraR/GraS involved in resistance against cationic antimicrobial peptides (CAMPs). Functions as a sensor protein kinase which phosphorylates GraR through the auxiliary protein GraX. In turn, GraR up-regulates many genes such as adhesins, exoproteins, transporters, toxins, and proteins involved in cell wall synthesis. Down-regulates the expression of many genes involved in RNA and amino acid synthesis or glycolysis. In Staphylococcus aureus (strain COL), this protein is Sensor histidine kinase GraS (graS).